The chain runs to 91 residues: Acylphosphatase (91 aa).

In terms of domain architecture, Acylphosphatase-like spans 3–90; sequence RVLIRVKGKV…EIYLDFSITQ (88 aa). Active-site residues include Arg-18 and Asn-36.

This sequence belongs to the acylphosphatase family.

The enzyme catalyses an acyl phosphate + H2O = a carboxylate + phosphate + H(+). The chain is Acylphosphatase (acyP) from Shewanella amazonensis (strain ATCC BAA-1098 / SB2B).